A 111-amino-acid polypeptide reads, in one-letter code: U-scoloptoxin(16)-Sm2a (111 aa).

Positions 1-28 (MCAKPNHLFVTVTFIFGFAVCIVQISAW) are cleaved as a signal peptide.

This sequence belongs to the scoloptoxin-16 family. In terms of processing, contains 4 disulfide bonds. Expressed by the venom gland.

Its subcellular location is the secreted. The protein is U-scoloptoxin(16)-Sm2a of Scolopendra morsitans (Tanzanian blue ringleg centipede).